A 715-amino-acid polypeptide reads, in one-letter code: Fatty acid oxidation complex subunit alpha (715 aa).

Positions 1–190 (MTTTSAFMLN…RAGLVDDVVP (190 aa)) are enoyl-CoA hydratase. The 3-hydroxyacyl-CoA dehydrogenase stretch occupies residues 306–715 (GPLNSVGILG…WTNGETDQGN (410 aa)).

The protein in the N-terminal section; belongs to the enoyl-CoA hydratase/isomerase family. This sequence in the central section; belongs to the 3-hydroxyacyl-CoA dehydrogenase family. In terms of assembly, heterotetramer of two alpha chains (FadJ) and two beta chains (FadI).

It is found in the cytoplasm. The enzyme catalyses a (3S)-3-hydroxyacyl-CoA = a (2E)-enoyl-CoA + H2O. It catalyses the reaction a 4-saturated-(3S)-3-hydroxyacyl-CoA = a (3E)-enoyl-CoA + H2O. It carries out the reaction a (3S)-3-hydroxyacyl-CoA + NAD(+) = a 3-oxoacyl-CoA + NADH + H(+). The catalysed reaction is (3S)-3-hydroxybutanoyl-CoA = (3R)-3-hydroxybutanoyl-CoA. It functions in the pathway lipid metabolism; fatty acid beta-oxidation. Its function is as follows. Catalyzes the formation of a hydroxyacyl-CoA by addition of water on enoyl-CoA. Also exhibits 3-hydroxyacyl-CoA epimerase and 3-hydroxyacyl-CoA dehydrogenase activities. This is Fatty acid oxidation complex subunit alpha from Salmonella schwarzengrund (strain CVM19633).